We begin with the raw amino-acid sequence, 401 residues long: MRNKRRNRQIVVAVNGGKAVKAIFLFIVSLIVIFVLSGVLTSLRPELRPSSDSFYGIAEELPGDVFAHLLQMENHYFASDLSQTDSSFHLSRLSLKLATSINLEDPRSFLGRELPGFAQFDTEILLAGQGTDYTNMPAESPPPSKVMEEEREANLAEIEKQQTQSDNAQKDPPKQTTGDKKVVFIYHTHNTESYLPLLKGETDPDMARHSKANVTLVGDMFGQALESQGIGATVNKTDIQSKLNKKGLNYARSYDESRPVVKDALASNKNLQYIIDIHRDSRRKKDTTATIKGKSYARVAFVVGKKSKNFEENYKIASELHKLMEKKYPGLSTGVFSKGSPGDNGVYNQDLTDRALLLEFGGVDNNLEELQRAANAAADVFSEMYWDAEKVNAASGETKKQ.

Positions 131–179 are disordered; the sequence is TDYTNMPAESPPPSKVMEEEREANLAEIEKQQTQSDNAQKDPPKQTTGD. Composition is skewed to basic and acidic residues over residues 146–160 and 168–179; these read VMEEEREANLAEIEK and AQKDPPKQTTGD.

This is Stage II sporulation protein P (spoIIP) from Bacillus subtilis (strain 168).